The primary structure comprises 553 residues: Chaperonin GroEL (553 aa).

ATP is bound by residues 29-32, Lys-50, 86-90, Gly-424, and Asp-504; these read TLGP and DGTTT.

This sequence belongs to the chaperonin (HSP60) family. In terms of assembly, forms a cylinder of 14 subunits composed of two heptameric rings stacked back-to-back. Interacts with the co-chaperonin GroES.

It is found in the cytoplasm. It catalyses the reaction ATP + H2O + a folded polypeptide = ADP + phosphate + an unfolded polypeptide.. In terms of biological role, together with its co-chaperonin GroES, plays an essential role in assisting protein folding. The GroEL-GroES system forms a nano-cage that allows encapsulation of the non-native substrate proteins and provides a physical environment optimized to promote and accelerate protein folding. This Koribacter versatilis (strain Ellin345) protein is Chaperonin GroEL.